We begin with the raw amino-acid sequence, 227 residues long: MICOS complex subunit MIC19 (227 aa).

Residue Gly-2 is the site of N-myristoyl glycine attachment. Position 29 is a phosphoserine (Ser-29). 2 disordered regions span residues 34–61 and 73–92; these read DRMKESSPSGSKSQRYSGAYGASVSDEE and EQAKKESEDQKRLKQAKELD. Over residues 39–49 the composition is skewed to polar residues; it reads SSPSGSKSQRY. Tyr-49 carries the post-translational modification Phosphotyrosine. Phosphoserine occurs at positions 50, 56, and 58. Lys-142 carries the post-translational modification N6-acetyllysine. Residues 180 to 222 enclose the CHCH domain; that stretch reads HPVCADLQAKILQCYRENTHQTLKCSALATQYMHCVNHAKQSM. 2 consecutive short sequence motifs (cx9C motif) follow at residues 183-193 and 204-214; these read CADLQAKILQC and CSALATQYMHC. 2 cysteine pairs are disulfide-bonded: Cys-183–Cys-214 and Cys-193–Cys-204.

Belongs to the MICOS complex subunit Mic19 family. Metazoan Mic19 subfamily. As to quaternary structure, component of the mitochondrial contact site and cristae organizing system (MICOS) complex, composed of at least MICOS10/MIC10, CHCHD3/MIC19, CHCHD6/MIC25, APOOL/MIC27, IMMT/MIC60, APOO/MIC23/MIC26 and MICOS13/MIC13. This complex was also known under the names MINOS or MitOS complex. The MICOS complex associates with mitochondrial outer membrane proteins SAMM50, MTX1 and MTX2 (together described as components of the mitochondrial outer membrane sorting assembly machinery (SAM) complex) and DNAJC11, mitochondrial inner membrane protein TMEM11 and with HSPA9. The MICOS and SAM complexes together with DNAJC11 are part of a large protein complex spanning both membranes termed the mitochondrial intermembrane space bridging (MIB) complex. Interacts with HSPA1A/HSPA1B and OPA1, preferentially with the soluble OPA1 form. Interacts with IMMT/MIC60. (Microbial infection) Interacts with human cytomegalovirus protein UL13; this interaction alters cristae architecture. Detected at low levels in brain, placenta, lung, liver, kidney and pancreas with increased levels in heart and skeletal muscle. Higher expression in primary lung cancers than in normal lung tissue.

Its subcellular location is the mitochondrion inner membrane. The protein resides in the cytoplasm. The protein localises to the nucleus. It is found in the mitochondrion. Functionally, component of the MICOS complex, a large protein complex of the mitochondrial inner membrane that plays crucial roles in the maintenance of crista junctions, inner membrane architecture, and formation of contact sites to the outer membrane. Plays an important role in the maintenance of the MICOS complex stability and the mitochondrial cristae morphology. Has also been shown to function as a transcription factor which binds to the BAG1 promoter and represses BAG1 transcription. This is MICOS complex subunit MIC19 (CHCHD3) from Homo sapiens (Human).